Here is a 443-residue protein sequence, read N- to C-terminus: Ribulose bisphosphate carboxylase large chain (443 aa).

The substrate site is built by asparagine 89 and threonine 139. Lysine 141 serves as the catalytic Proton acceptor. Lysine 143 is a binding site for substrate. Lysine 167, aspartate 169, and glutamate 170 together coordinate Mg(2+). At lysine 167 the chain carries N6-carboxylysine. Histidine 260 serves as the catalytic Proton acceptor. Substrate is bound by residues arginine 261, histidine 293, and serine 345.

The protein belongs to the RuBisCO large chain family. Type I subfamily. In terms of assembly, heterohexadecamer of 8 large chains and 8 small chains; disulfide-linked. The disulfide link is formed within the large subunit homodimers. It depends on Mg(2+) as a cofactor. The disulfide bond which can form in the large chain dimeric partners within the hexadecamer appears to be associated with oxidative stress and protein turnover.

It localises to the plastid. Its subcellular location is the chloroplast. The catalysed reaction is 2 (2R)-3-phosphoglycerate + 2 H(+) = D-ribulose 1,5-bisphosphate + CO2 + H2O. The enzyme catalyses D-ribulose 1,5-bisphosphate + O2 = 2-phosphoglycolate + (2R)-3-phosphoglycerate + 2 H(+). Functionally, ruBisCO catalyzes two reactions: the carboxylation of D-ribulose 1,5-bisphosphate, the primary event in carbon dioxide fixation, as well as the oxidative fragmentation of the pentose substrate in the photorespiration process. Both reactions occur simultaneously and in competition at the same active site. In Verbena bonariensis (Argentinian vervain), this protein is Ribulose bisphosphate carboxylase large chain.